We begin with the raw amino-acid sequence, 422 residues long: UDP-N-acetylglucosamine 1-carboxyvinyltransferase (422 aa).

22–23 (KN) is a phosphoenolpyruvate binding site. Residue arginine 93 coordinates UDP-N-acetyl-alpha-D-glucosamine. The active-site Proton donor is the cysteine 117. The residue at position 117 (cysteine 117) is a 2-(S-cysteinyl)pyruvic acid O-phosphothioketal. Residues 122 to 126 (RPVDQ), aspartate 309, and isoleucine 331 contribute to the UDP-N-acetyl-alpha-D-glucosamine site.

This sequence belongs to the EPSP synthase family. MurA subfamily.

The protein localises to the cytoplasm. The catalysed reaction is phosphoenolpyruvate + UDP-N-acetyl-alpha-D-glucosamine = UDP-N-acetyl-3-O-(1-carboxyvinyl)-alpha-D-glucosamine + phosphate. It functions in the pathway cell wall biogenesis; peptidoglycan biosynthesis. In terms of biological role, cell wall formation. Adds enolpyruvyl to UDP-N-acetylglucosamine. The protein is UDP-N-acetylglucosamine 1-carboxyvinyltransferase of Delftia acidovorans (strain DSM 14801 / SPH-1).